A 168-amino-acid chain; its full sequence is ATP synthase F(1) complex subunit delta, mitochondrial (168 aa).

The N-terminal 22 residues, 1 to 22 (MLPSALLRRPGLGRLVRQVRLY), are a transit peptide targeting the mitochondrion. Lys-136 and Lys-165 each carry N6-acetyllysine; alternate. N6-succinyllysine; alternate occurs at positions 136 and 165.

Belongs to the ATPase epsilon chain family. As to quaternary structure, component of the ATP synthase complex composed at least of ATP5F1A/subunit alpha, ATP5F1B/subunit beta, ATP5MC1/subunit c (homooctomer), MT-ATP6/subunit a, MT-ATP8/subunit 8, ATP5ME/subunit e, ATP5MF/subunit f, ATP5MG/subunit g, ATP5MK/subunit k, ATP5MJ/subunit j, ATP5F1C/subunit gamma, ATP5F1D/subunit delta, ATP5F1E/subunit epsilon, ATP5PF/subunit F6, ATP5PB/subunit b, ATP5PD/subunit d, ATP5PO/subunit OSCP. ATP synthase complex consists of a soluble F(1) head domain (subunits alpha(3) and beta(3)) - the catalytic core - and a membrane F(0) domain - the membrane proton channel (subunits c, a, 8, e, f, g, k and j). These two domains are linked by a central stalk (subunits gamma, delta, and epsilon) rotating inside the F1 region and a stationary peripheral stalk (subunits F6, b, d, and OSCP). Component of a complex composed at least by ATPIF1, ATP5F1A, ATP5F1B, ATP5F1C AND ATP5F1E.

It localises to the mitochondrion. The protein localises to the mitochondrion inner membrane. In terms of biological role, subunit delta, of the mitochondrial membrane ATP synthase complex (F(1)F(0) ATP synthase or Complex V) that produces ATP from ADP in the presence of a proton gradient across the membrane which is generated by electron transport complexes of the respiratory chain. ATP synthase complex consist of a soluble F(1) head domain - the catalytic core - and a membrane F(1) domain - the membrane proton channel. These two domains are linked by a central stalk rotating inside the F(1) region and a stationary peripheral stalk. During catalysis, ATP synthesis in the catalytic domain of F(1) is coupled via a rotary mechanism of the central stalk subunits to proton translocation. In vivo, can only synthesize ATP although its ATP hydrolase activity can be activated artificially in vitro. With the central stalk subunit gamma, is essential for the biogenesis of F(1) catalytic part of the ATP synthase complex namely in the formation of F1 assembly intermediate. This chain is ATP synthase F(1) complex subunit delta, mitochondrial, found in Bos taurus (Bovine).